Reading from the N-terminus, the 287-residue chain is Large ribosomal subunit protein uL2 (287 aa).

Positions 221 to 287 (RGSVMNPCDH…SKRSRGGRDS (67 aa)) are disordered. The segment covering 258 to 287 (KTRKKNKPSNKLVVRRRRRISKRSRGGRDS) has biased composition (basic residues).

This sequence belongs to the universal ribosomal protein uL2 family. Part of the 50S ribosomal subunit. Forms a bridge to the 30S subunit in the 70S ribosome.

In terms of biological role, one of the primary rRNA binding proteins. Required for association of the 30S and 50S subunits to form the 70S ribosome, for tRNA binding and peptide bond formation. It has been suggested to have peptidyltransferase activity; this is somewhat controversial. Makes several contacts with the 16S rRNA in the 70S ribosome. The polypeptide is Large ribosomal subunit protein uL2 (Prochlorococcus marinus (strain MIT 9215)).